Reading from the N-terminus, the 2224-residue chain is MLKSAASSLRRRRPKTTITATLAIEMPSQPKLASLLAVLVLLCYCDSCFFCYADANLQQQNSIVQQQQLQAPRFTTHPSSSGSIVSEGSTKILQCHALGYPQPTYRWLKDGVPVGDFSSSQFYRFHSTRREDAGSYQCIARNDAGSIFSEKSDVVVAYMGIFENTTEGRLTVISGHPAIFDMPPIESIPVPSVMWQSEDGPLNYDIKYAFTHANQLIILSADENDRKGYRAKAINTQLGKEESSAFVHLNVSGDPYIEVAPEIIVRPQDVKVKVGTGVVELQCIANARPLHELETLWLKDGLAVETAGVRHTLNDPWNRTLALLQANSSHSGEYTCQVRLRSGGYPAVSASARLQILEPPLFFTPMRAETFGEFGGQVQLTCDVVGEPTPQVKWFRNAESVDAHIESGRYTLNTDNTLVIKKLILDDAAMFQCLAINEAGENSASTWLRVKTSAPIMELPPQNVTALDGKDATISCRAVGSPNPNITWIYNETQLVDISSRVQILESGDLLISNIRSVDAGLYICVRANEAGSVKGEAYLSVLVRTQIIQPPVDTTVLLGLTATLQCKVSSDPSVPYNIDWYREGQSSTPISNSQRIGVQADGQLEIQAVRASDVGSYACVVTSPGGNETRAARLSVIELPFPPSNVKVERLPEPQQRSINVSWTPGFDGNSPISKFIIQRREVSELEKFVGPVPDPLLNWITELSNVSADQRWILLENLKAATVYQFRVSAVNRVGEGSPSEPSNVVELPQEAPSGPPVGFVGSARSMSEIITQWQPPLEEHRNGQILGYILRYRLFGYNNVPWSYQNITNEAQRNFLIQELITWKDYIVQIAAYNNMGVGVYTEGSKIKTKEGVPEAPPTNVKVEAINSTAARCRWTPPNPQQINGINQGYKIQAWQRRLIDGEWRDIERRMKTVPPSLIDPLAEQTAILGGLEKFTEYNISVLCFTDPGDGVASSQVAVMTMDDVPDEVTGLHFDDVSDRSVKVLWAPPRASNGILTGYTVRYQVKDRPDTLKSFNLTADDTELTVNQLQATTHYWFEIVAWTRVGSGIPKTATIQSGVEPVLPHAPTALALSNIEAFSVVLQFTPGFDGNSSITKWKVEGQTARNMTWFTICEINDPDAETLTVTGLVPFTQYRLRLSASNVVGSSKPSEATKDFQTIQARPKHPPFNVTVRAMSAQQLRVRWIPLQQTEWYGNPRGYNISYKQLVKTPGTIKYVPRSVVIEDHTANSHVLDSLEEWTLYEVKMNACNDVGCSKESDTAVERTREAVPSYGPLDVQANATSSTTVVVQWGEVPRQHRNGQIDGYKVFYAAADRGQQVLHKTIPNNATFTTTLTELKKYVVYHVQVLAYTRLGNGALSTPPIRVQTFEDTPGVPSNVSFPDVSLTMARIIWDVPVDPNGKILAYQVTYTLNGSAMLNYSREFPPSDRTFRATELLPGKYYSFSCTAQTRLGWGKIATALVYTTNNRERPQAPSVPQISRSQIQAHQITFSWTPGRDGFAPLRYYTVEMRENEGRWQPLPERVDPSLSSFTAVGLRPYMTYQFRIQATNDLGPSAFSRESVIVRTLPAAPAVGVGGLKVVPITTTSVRVQWSALETALWNGDASTGGYRILYQQLSDFPTALQSTPKTDVHGINENSVVLSDLQQDRNYEIVVLPFNSQGPGPATPPAAVYVGEAVPTGEPRAVDAAPISSTEVRLLWKPPKQSMQNGDILGYKIYYLVTYSPQALEPGRKWEEEIEVVSATATSHSLVFLDKFTEYRIQLLAFNPAGDGPRSAPITVKTLPGVPSAPLHLRFSDITMQSLEVTWDPPKFLNGEILGYLVTYETTEENEKFSKQVKQKVSNTTLRVQNLEEEVTYTFTVRAQTSVDYGPGISENVTTGPQDGSPVAPRDLILTKTLSSVEMHWINGPSGRGPILGYLIEAKKRDDSRWTKIEQTRKGMMQDFTVSYHILMPSTAYTFRVIAYNRYGISFPVYSKDSILTPSKLHLEYGYLQHKPFYRQTWFMVSLAATSIVIIVMVIAVLCVKSKSYKYKQEAQKTLEESMAMSIDERQELALELYRSRHGVGTGTLNSVGTLRSGTLGTLGRKSTSRPPPGVHLGKSPPRPSPASVAYHSDEESLKCYDENPDDSSVTEKPSEVSSSEASQHSESENESVRSDPHSFVNHYANVNDSLRQSWKKTKPVRNYSSYTDSEPEGSAVMSLNGGQIIVNNMARSRAPLPGFSSFV.

The signal sequence occupies residues 1-47 (MLKSAASSLRRRRPKTTITATLAIEMPSQPKLASLLAVLVLLCYCDS). Over 48–2001 (CFFCYADANL…LQHKPFYRQT (1954 aa)) the chain is Extracellular. An Ig-like C2-type 1 domain is found at 72–155 (PRFTTHPSSS…SIFSEKSDVV (84 aa)). A disulfide bridge links Cys-95 with Cys-138. Residues Asn-164, Asn-250, Asn-318, and Asn-327 are each glycosylated (N-linked (GlcNAc...) asparagine). 4 Ig-like C2-type domains span residues 261 to 355 (PEII…ARLQ), 359 to 445 (PPLF…NSAS), 455 to 541 (PIME…AYLS), and 546 to 636 (TQII…ARLS). Cystine bridges form between Cys-283–Cys-336 and Cys-382–Cys-433. Asn-463, Asn-485, and Asn-491 each carry an N-linked (GlcNAc...) asparagine glycan. 2 cysteine pairs are disulfide-bonded: Cys-476/Cys-525 and Cys-567/Cys-620. Residues Asn-628, Asn-661, Asn-707, Asn-809, Asn-870, Asn-942, Asn-1019, Asn-1094, Asn-1109, Asn-1172, Asn-1203, Asn-1282, Asn-1329, Asn-1379, Asn-1414, and Asn-1420 are each glycosylated (N-linked (GlcNAc...) asparagine). 13 consecutive Fibronectin type-III domains span residues 643–753 (PPSN…LPQE), 758–855 (PPVG…TKEG), 860–967 (PPTN…TMDD), 971–1065 (EVTG…VEPV), 1069–1164 (APTA…TIQA), 1169–1270 (PPFN…TREA), 1275–1372 (GPLD…TFED), 1376–1469 (VPSN…TNNR), 1474–1570 (APSV…TLPA), 1575–1677 (GVGG…VGEA), 1682–1785 (EPRA…TLPG), 1789–1883 (APLH…GPQD), and 1885–1984 (SPVA…TPSK). 2 N-linked (GlcNAc...) asparagine glycosylation sites follow: Asn-1843 and Asn-1876. Residues 2002-2022 (WFMVSLAATSIVIIVMVIAVL) traverse the membrane as a helical segment. Over 2023-2224 (CVKSKSYKYK…APLPGFSSFV (202 aa)) the chain is Cytoplasmic. Disordered regions lie at residues 2068–2157 (TLNS…RSDP) and 2171–2195 (LRQS…PEGS). Ser-2071 is modified (phosphoserine). Residues 2073–2085 (GTLRSGTLGTLGR) are compositionally biased toward low complexity. A Phosphothreonine modification is found at Thr-2074. Composition is skewed to basic and acidic residues over residues 2112-2122 (HSDEESLKCYD) and 2144-2157 (QHSE…RSDP). Phosphoserine occurs at positions 2113 and 2117.

This sequence belongs to the sidekick family.

It localises to the membrane. Its function is as follows. Participates in homotypic or heterotypic interactions in the eye during pattern formation to prevent extra cells from joining the precluster and differentiating as photoreceptor cells. The chain is Protein sidekick from Drosophila melanogaster (Fruit fly).